A 478-amino-acid polypeptide reads, in one-letter code: Aspartyl/glutamyl-tRNA(Asn/Gln) amidotransferase subunit B 2 (478 aa).

It belongs to the GatB/GatE family. GatB subfamily. As to quaternary structure, heterotrimer of A, B and C subunits.

It catalyses the reaction L-glutamyl-tRNA(Gln) + L-glutamine + ATP + H2O = L-glutaminyl-tRNA(Gln) + L-glutamate + ADP + phosphate + H(+). The enzyme catalyses L-aspartyl-tRNA(Asn) + L-glutamine + ATP + H2O = L-asparaginyl-tRNA(Asn) + L-glutamate + ADP + phosphate + 2 H(+). Functionally, allows the formation of correctly charged Asn-tRNA(Asn) or Gln-tRNA(Gln) through the transamidation of misacylated Asp-tRNA(Asn) or Glu-tRNA(Gln) in organisms which lack either or both of asparaginyl-tRNA or glutaminyl-tRNA synthetases. The reaction takes place in the presence of glutamine and ATP through an activated phospho-Asp-tRNA(Asn) or phospho-Glu-tRNA(Gln). The polypeptide is Aspartyl/glutamyl-tRNA(Asn/Gln) amidotransferase subunit B 2 (gatB2) (Clostridium acetobutylicum (strain ATCC 824 / DSM 792 / JCM 1419 / IAM 19013 / LMG 5710 / NBRC 13948 / NRRL B-527 / VKM B-1787 / 2291 / W)).